The primary structure comprises 1308 residues: Limbin (1308 aa).

The first 26 residues, 1-26, serve as a signal peptide directing secretion; sequence MDPSGSRGRPTWVLAGGLLAVALALG. Residues 27–300 are Extracellular-facing; it reads GRGCLGASSR…VLPHHGLHAA (274 aa). Residues 36–76 form a disordered region; that stretch reads RPRWRPLGAQPPRDPQVAPRSGPGLRIPPGRSGAGPESSTQ. N-linked (GlcNAc...) asparagine glycosylation occurs at N220. The helical transmembrane segment at 301–321 threads the bilayer; the sequence is GFFIAFLLSLVLTWAALFLMV. The Cytoplasmic segment spans residues 322–1308; the sequence is RYQCLKGNML…KKAMRALGMD (987 aa). Coiled-coil stretches lie at residues 455-578, 636-800, and 1001-1113; these read TAEC…ELMD, DQME…DRDQ, and ASEM…EADT. Positions 784–801 are enriched in basic and acidic residues; the sequence is MAARAEQLEGEERDRDQE. The segment at 784–816 is disordered; that stretch reads MAARAEQLEGEERDRDQEGVQSVRQRLKDDAPE.

In terms of assembly, component of the EvC complex composed of EFCAB7, IQCE, EVC2 and EVC; built from two subcomplexes, EVC2:EVC and EFCAB7:IQCE. Interacts with EVC. Interacts (via N-terminal end) with EFCAB7. Interacts (via N-terminal end) with IQCE. Found in the heart, placenta, lung, liver, skeletal muscle, kidney and pancreas.

It localises to the cell membrane. The protein resides in the cytoplasm. Its subcellular location is the cytoskeleton. The protein localises to the cilium basal body. It is found in the cell projection. It localises to the cilium. The protein resides in the cilium membrane. Its subcellular location is the nucleus. Its function is as follows. Component of the EvC complex that positively regulates ciliary Hedgehog (Hh) signaling. Plays a critical role in bone formation and skeletal development. May be involved in early embryonic morphogenesis. The sequence is that of Limbin (EVC2) from Homo sapiens (Human).